The chain runs to 86 residues: Small ribosomal subunit protein bS20 (86 aa).

Belongs to the bacterial ribosomal protein bS20 family.

Functionally, binds directly to 16S ribosomal RNA. The polypeptide is Small ribosomal subunit protein bS20 (Pseudarthrobacter chlorophenolicus (strain ATCC 700700 / DSM 12829 / CIP 107037 / JCM 12360 / KCTC 9906 / NCIMB 13794 / A6) (Arthrobacter chlorophenolicus)).